The sequence spans 1925 residues: Methylcytosine dioxygenase tet3-A (1925 aa).

A CXXC-type zinc finger spans residues 62–103; it reads SNKKRKRCGVCVPCLRKEPCGACYNCVNRSTSHQICKMRKCE. Positions 69, 72, 75, 81, 84, 87, 97, and 102 each coordinate Zn(2+). 4 disordered regions span residues 457-476, 630-685, 774-812, and 833-892; these read KNAL…QNKK, KSQK…NAVF, GAKD…QNDL, and DFSL…PISH. Residues 465–476 show a composition bias toward polar residues; it reads SPRQTSWEQNKK. The segment covering 665–677 has biased composition (basic residues); the sequence is KPPRKQVQIKKPR. The span at 777–797 shows a compositional bias: low complexity; sequence DSCPTPSTDDASSSSGQGDSA. 2 stretches are compositionally biased toward polar residues: residues 841 to 856 and 883 to 892; these read APSQ…QISG and PALSNNPISH. Zn(2+) contacts are provided by C982, C984, C1042, H1068, and C1070. R1110 provides a ligand contact to 2-oxoglutarate. C1120, C1122, C1138, C1147, and C1207 together coordinate Zn(2+). C1223 provides a ligand contact to 2-oxoglutarate. A Zn(2+)-binding site is contributed by H1229. Fe cation is bound by residues H1231 and D1233. Position 1265 (H1265) interacts with 2-oxoglutarate. Disordered stretches follow at residues 1307–1364, 1474–1513, 1556–1600, and 1722–1769; these read SEPA…QTKP, LADG…KSFN, SVHS…LPND, and NWAS…EEEI. Residues 1316–1347 are compositionally biased toward basic and acidic residues; sequence RQLDAKKAAAEKKKLQKEKLVSPDKTKQEPAD. Polar residues predominate over residues 1350-1363; that stretch reads MCQQNPGVPQQQTK. The segment covering 1490-1499 has biased composition (basic and acidic residues); the sequence is SYRRSSEVPH. Composition is skewed to polar residues over residues 1502 to 1513, 1556 to 1572, and 1730 to 1742; these read SLQNPNSQKSFN, SVHS…QTSD, and VGNS…SQNH. Residue H1804 coordinates Fe cation. 2-oxoglutarate is bound at residue 1819 to 1821; the sequence is RIS. Positions 1837–1870 form a coiled coil; sequence LALWEAKMKLLAERARVKEEEAARLGIKQEVKSL.

The protein belongs to the TET family. Requires Fe(2+) as cofactor. Zn(2+) is required as a cofactor. In terms of tissue distribution, detected in embryo (at protein level). Detected in embryonic head, in developing brain, neural tube and eye.

The protein resides in the nucleus. It is found in the chromosome. The catalysed reaction is a 5-methyl-2'-deoxycytidine in DNA + 2-oxoglutarate + O2 = a 5-hydroxymethyl-2'-deoxycytidine in DNA + succinate + CO2. It carries out the reaction a 5-hydroxymethyl-2'-deoxycytidine in DNA + 2-oxoglutarate + O2 = a 5-formyl-2'-deoxycytidine in DNA + succinate + CO2 + H2O. It catalyses the reaction a 5-formyl-2'-deoxycytidine in DNA + 2-oxoglutarate + O2 = a 5-carboxyl-2'-deoxycytidine in DNA + succinate + CO2 + H(+). In terms of biological role, dioxygenase that catalyzes the conversion of the modified genomic base 5-methylcytosine (5mC) into 5-hydroxymethylcytosine (5hmC) and plays a key role in epigenetic chromatin reprogramming during embryonic development. Conversion of 5mC into 5hmC probably constitutes the first step in cytosine demethylation. Selectively binds to the promoter region of target genes and contributes to regulate the expression of numerous developmental genes, including pax6, rax, sox9 and six3. May also contribute to the regulation of target genes in ways that do not require its enzyme activity. The protein is Methylcytosine dioxygenase tet3-A of Xenopus laevis (African clawed frog).